A 264-amino-acid polypeptide reads, in one-letter code: Undecaprenyl-diphosphatase (264 aa).

A run of 7 helical transmembrane segments spans residues 34-54, 75-95, 104-124, 137-157, 180-200, 207-227, and 243-263; these read LLNLPIAIAYSFGLFMEMGSI, LLYLAIITIITGLVGVPLYII, YDPSIPMIILGIALIVDGLYI, LSLKNIILIGIAQGLAALPGV, YSYLAYIPAAVGAVGTTILFS, VISLIGIGGVLISVISAFIIG, and IYIIDFTLGGIAIVVSVLTIL.

This sequence belongs to the UppP family.

It localises to the cell membrane. The enzyme catalyses di-trans,octa-cis-undecaprenyl diphosphate + H2O = di-trans,octa-cis-undecaprenyl phosphate + phosphate + H(+). Functionally, catalyzes the dephosphorylation of undecaprenyl diphosphate (UPP). In Sulfurisphaera tokodaii (strain DSM 16993 / JCM 10545 / NBRC 100140 / 7) (Sulfolobus tokodaii), this protein is Undecaprenyl-diphosphatase.